Consider the following 465-residue polypeptide: G1/S-specific cyclin CLN2 (465 aa).

The protein belongs to the cyclin family.

Its function is as follows. Essential for the control of the cell cycle at the G1/S (start) transition. Interacts with the CDC28 protein kinase to form MPF. This chain is G1/S-specific cyclin CLN2 (CLN2), found in Candida albicans (Yeast).